The sequence spans 313 residues: tRNA pseudouridine synthase B (313 aa).

Catalysis depends on Asp48, which acts as the Nucleophile.

It belongs to the pseudouridine synthase TruB family. Type 1 subfamily.

It carries out the reaction uridine(55) in tRNA = pseudouridine(55) in tRNA. In terms of biological role, responsible for synthesis of pseudouridine from uracil-55 in the psi GC loop of transfer RNAs. In Saccharophagus degradans (strain 2-40 / ATCC 43961 / DSM 17024), this protein is tRNA pseudouridine synthase B.